The sequence spans 251 residues: Triosephosphate isomerase (251 aa).

9 to 11 (NWK) lines the substrate pocket. Catalysis depends on histidine 93, which acts as the Electrophile. Glutamate 163 acts as the Proton acceptor in catalysis. Residues glycine 169, serine 209, and 230 to 231 (GG) contribute to the substrate site.

It belongs to the triosephosphate isomerase family. As to quaternary structure, homodimer.

It localises to the cytoplasm. It carries out the reaction D-glyceraldehyde 3-phosphate = dihydroxyacetone phosphate. Its pathway is carbohydrate biosynthesis; gluconeogenesis. The protein operates within carbohydrate degradation; glycolysis; D-glyceraldehyde 3-phosphate from glycerone phosphate: step 1/1. Its function is as follows. Involved in the gluconeogenesis. Catalyzes stereospecifically the conversion of dihydroxyacetone phosphate (DHAP) to D-glyceraldehyde-3-phosphate (G3P). In Ruegeria pomeroyi (strain ATCC 700808 / DSM 15171 / DSS-3) (Silicibacter pomeroyi), this protein is Triosephosphate isomerase.